We begin with the raw amino-acid sequence, 108 residues long: Alkyltransferase-like protein 1 (108 aa).

It belongs to the MGMT family. ATL subfamily.

Its function is as follows. Involved in DNA damage recognition. Binds DNA containing O(6)-methylguanine and larger O(6)-alkylguanine adducts. The DNA is bent, the damaged base is rotated out of the DNA duplex into a hydrophobic binding pocket (nucleotide flipping), with Arg-39 donating a hydrogen bond to the orphaned cytosine to stabilize the extrahelical DNA conformation. This structural change in DNA presents the lesion to the nucleotide excision repair (NER) pathway. The affinity for O(6)-alkylguanine adducts increases with the size of the alkyl group. Low affinity small O(6)-alkylguanines are directed to the global genome repair pathway of NER via rhp7-rhp16 and rhp41-rhp23, while strong binding to bulky O(6)-alkylguanines stalls the transcription machinery and diverts the damage to the transcription-coupled repair pathway of NER via rhp26. In Schizosaccharomyces pombe (strain 972 / ATCC 24843) (Fission yeast), this protein is Alkyltransferase-like protein 1.